The sequence spans 303 residues: E3 ubiquitin-protein ligase CCNB1IP1 homolog (303 aa).

The RING-type; degenerate zinc finger occupies 3 to 42; that stretch reads CNACWRELEGQAVSTTCGHLLCTEDAKKILSNDAACPICD. Positions 119 to 184 form a coiled coil; the sequence is LEEVHTAYQK…YESAKRSAIQ (66 aa). Positions 201–268 are disordered; sequence VPNIMDSSDP…DIRPRQPARP (68 aa).

Interacts with ZIP4 and PTD. As to expression, expressed in young panicles.

It localises to the nucleus. It is found in the chromosome. The catalysed reaction is S-ubiquitinyl-[E2 ubiquitin-conjugating enzyme]-L-cysteine + [acceptor protein]-L-lysine = [E2 ubiquitin-conjugating enzyme]-L-cysteine + N(6)-ubiquitinyl-[acceptor protein]-L-lysine.. It participates in protein modification; protein ubiquitination. In terms of biological role, ubiquitin E3 ligase required for class I crossover (CO) formation during meiosis. This chain is E3 ubiquitin-protein ligase CCNB1IP1 homolog, found in Oryza sativa subsp. japonica (Rice).